Consider the following 325-residue polypeptide: MNRTDLFKGYERLESQFELQGIDGMLTALAPVFDHPRGNTLKYTKALEGLPETIASIVDLDRDAPRVGVDSDLSFGQHQQLYQSLFQLCPWRKGPFEFFGIDLDAEWQSNIKWDRFAGRISALTHRRVLDIGSSNGYYMFRMASQKPRLVLGLEPQHTFYFQFHAVNQYAGQANLFALPIAFDAMPVTRGFFDTVFCMGVLYHRRSPLGMLRKIHDMMQIGGELVLENLVLESREDLCLFPEDRYAKMRNVFFIPSLKVMESWLKRAGFAEVSCIDISLTTPGEQRKTDWIQTESLDDFLDPRDRSRTVEGYPAPVRAVFTARAI.

Residues lysine 93, tryptophan 107, lysine 112, glycine 132, methionine 198, tyrosine 202, and arginine 317 each coordinate carboxy-S-adenosyl-L-methionine.

Belongs to the class I-like SAM-binding methyltransferase superfamily. CmoB family. In terms of assembly, homotetramer.

It catalyses the reaction carboxy-S-adenosyl-L-methionine + 5-hydroxyuridine(34) in tRNA = 5-carboxymethoxyuridine(34) in tRNA + S-adenosyl-L-homocysteine + H(+). Functionally, catalyzes carboxymethyl transfer from carboxy-S-adenosyl-L-methionine (Cx-SAM) to 5-hydroxyuridine (ho5U) to form 5-carboxymethoxyuridine (cmo5U) at position 34 in tRNAs. This chain is tRNA U34 carboxymethyltransferase, found in Desulforapulum autotrophicum (strain ATCC 43914 / DSM 3382 / VKM B-1955 / HRM2) (Desulfobacterium autotrophicum).